A 312-amino-acid chain; its full sequence is Glyoxylate/hydroxypyruvate reductase A (312 aa).

Arginine 227 is an active-site residue. Histidine 275 functions as the Proton donor in the catalytic mechanism.

Belongs to the D-isomer specific 2-hydroxyacid dehydrogenase family. GhrA subfamily.

It localises to the cytoplasm. The catalysed reaction is glycolate + NADP(+) = glyoxylate + NADPH + H(+). The enzyme catalyses (R)-glycerate + NAD(+) = 3-hydroxypyruvate + NADH + H(+). It catalyses the reaction (R)-glycerate + NADP(+) = 3-hydroxypyruvate + NADPH + H(+). In terms of biological role, catalyzes the NADPH-dependent reduction of glyoxylate and hydroxypyruvate into glycolate and glycerate, respectively. The protein is Glyoxylate/hydroxypyruvate reductase A of Salmonella dublin (strain CT_02021853).